Here is a 77-residue protein sequence, read N- to C-terminus: Translation initiation factor IF-1, chloroplastic (77 aa).

Positions 1 to 72 (MRKQNLIEME…TKGRITYRLR (72 aa)) constitute an S1-like domain.

The protein belongs to the IF-1 family. As to quaternary structure, component of the 30S ribosomal translation pre-initiation complex which assembles on the 30S ribosome in the order IF-2 and IF-3, IF-1 and N-formylmethionyl-tRNA(fMet); mRNA recruitment can occur at any time during PIC assembly.

Its subcellular location is the plastid. It is found in the chloroplast. In terms of biological role, one of the essential components for the initiation of protein synthesis. Stabilizes the binding of IF-2 and IF-3 on the 30S subunit to which N-formylmethionyl-tRNA(fMet) subsequently binds. Helps modulate mRNA selection, yielding the 30S pre-initiation complex (PIC). Upon addition of the 50S ribosomal subunit IF-1, IF-2 and IF-3 are released leaving the mature 70S translation initiation complex. The polypeptide is Translation initiation factor IF-1, chloroplastic (Staurastrum punctulatum (Green alga)).